Consider the following 84-residue polypeptide: Small ribosomal subunit protein bS18A (84 aa).

This sequence belongs to the bacterial ribosomal protein bS18 family. In terms of assembly, part of the 30S ribosomal subunit. Forms a tight heterodimer with protein bS6.

Its function is as follows. Binds as a heterodimer with protein bS6 to the central domain of the 16S rRNA, where it helps stabilize the platform of the 30S subunit. This chain is Small ribosomal subunit protein bS18A, found in Mycolicibacterium paratuberculosis (strain ATCC BAA-968 / K-10) (Mycobacterium paratuberculosis).